Consider the following 28-residue polypeptide: Trypsin inhibitor 2 (28 aa).

3 disulfides stabilise this stretch: cysteine 3-cysteine 20, cysteine 10-cysteine 22, and cysteine 16-cysteine 27.

It belongs to the protease inhibitor I7 (squash-type serine protease inhibitor) family.

The protein resides in the secreted. Inhibits trypsin. This is Trypsin inhibitor 2 from Momordica charantia (Bitter gourd).